A 630-amino-acid polypeptide reads, in one-letter code: Multidrug transporter TPO3 (630 aa).

Polar residues predominate over residues 1-35 (MVDQESLVSFSSETSQSINSDIDIESQQQPRQYIP). Disordered regions lie at residues 1-46 (MVDQ…KERL) and 107-157 (TSTA…NQQP). Over residues 37 to 46 (NEKDGNKERL) the composition is skewed to basic and acidic residues. Positions 125-137 (RRSQNIAASSNSS) are enriched in low complexity. N-linked (GlcNAc...) asparagine glycosylation is present at Asn135. The next 12 helical transmembrane spans lie at 190 to 210 (ILSC…GGLF), 222 to 242 (AAIL…LIWS), 252 to 272 (LAYF…ALSP), 282 to 302 (FLCG…IADM), 312 to 332 (IAFF…VNGF), 342 to 362 (LIFW…AFIP), 423 to 443 (FYVC…PVVF), 453 to 473 (LIGL…ATTF), 494 to 514 (LFGA…LGAT), 519 to 539 (IIWV…VLIY), 553 to 575 (YASS…FPLF), and 587 to 607 (WASW…FGFY).

The protein belongs to the major facilitator superfamily. DHA1 family. Polyamines/proton antiporter (TC 2.A.1.2.16) subfamily.

It is found in the cell membrane. Cell membrane polyamine/proton antiporter, involved in the detoxification of excess polyamines in the cytoplasm. Involved in the resistance to the imidazole antifungal drugs tioconazole, miconazole, clotrimazole and ketoconazole; to the triazole fluconazole; but not to the antifungals flucytosine or amphotericin B. Plays a role in spermine homeostasis, but spermine accumulation in response to clotrimazole is independent of TPO3. The protein is Multidrug transporter TPO3 of Candida glabrata (strain ATCC 2001 / BCRC 20586 / JCM 3761 / NBRC 0622 / NRRL Y-65 / CBS 138) (Yeast).